An 89-amino-acid chain; its full sequence is Glutamyl-tRNA(Gln) amidotransferase subunit C (89 aa).

It belongs to the GatC family. As to quaternary structure, heterotrimer of A, B and C subunits.

The catalysed reaction is L-glutamyl-tRNA(Gln) + L-glutamine + ATP + H2O = L-glutaminyl-tRNA(Gln) + L-glutamate + ADP + phosphate + H(+). The enzyme catalyses L-aspartyl-tRNA(Asn) + L-glutamine + ATP + H2O = L-asparaginyl-tRNA(Asn) + L-glutamate + ADP + phosphate + 2 H(+). Allows the formation of correctly charged Asn-tRNA(Asn) or Gln-tRNA(Gln) through the transamidation of misacylated Asp-tRNA(Asn) or Glu-tRNA(Gln) in organisms which lack either or both of asparaginyl-tRNA or glutaminyl-tRNA synthetases. The reaction takes place in the presence of glutamine and ATP through an activated phospho-Asp-tRNA(Asn) or phospho-Glu-tRNA(Gln). This is Glutamyl-tRNA(Gln) amidotransferase subunit C from Thermus thermophilus (strain ATCC 27634 / DSM 579 / HB8).